We begin with the raw amino-acid sequence, 241 residues long: Keratin-associated protein 5-5 (241 aa).

15 tandem repeats follow at residues 35 to 38, 41 to 44, 47 to 50, 105 to 108, 115 to 118, 133 to 136, 143 to 146, 161 to 164, 171 to 174, 181 to 184, 191 to 194, 201 to 204, 211 to 214, 221 to 224, and 231 to 234. The tract at residues 35-234 is 15 X 4 AA repeats of C-C-X-P; the sequence is CCKPVCCCKP…CCCQSSCCAP (200 aa).

It belongs to the KRTAP type 5 family. In terms of assembly, interacts with hair keratins.

In the hair cortex, hair keratin intermediate filaments are embedded in an interfilamentous matrix, consisting of hair keratin-associated protein (KRTAP), which are essential for the formation of a rigid and resistant hair shaft through their extensive disulfide bond cross-linking with abundant cysteine residues of hair keratins. The matrix proteins include the high-sulfur and high-glycine-tyrosine keratins. In Mus musculus (Mouse), this protein is Keratin-associated protein 5-5.